The following is a 152-amino-acid chain: Transcriptional repressor NrdR (152 aa).

The segment at 3–34 (CPFCNHGELKVIDSRNAPEANAIKRRRECLKC) is a zinc-finger region. One can recognise an ATP-cone domain in the interval 48–138 (LQVLKRDGRY…VYRRFKDVGE (91 aa)).

The protein belongs to the NrdR family. It depends on Zn(2+) as a cofactor.

In terms of biological role, negatively regulates transcription of bacterial ribonucleotide reductase nrd genes and operons by binding to NrdR-boxes. In Chlamydia pneumoniae (Chlamydophila pneumoniae), this protein is Transcriptional repressor NrdR.